The chain runs to 344 residues: tRNA N6-adenosine threonylcarbamoyltransferase (344 aa).

The Fe cation site is built by His111 and His115. Substrate-binding positions include 133-137 (LVSGG), Asp166, Gly179, and Asn283. Position 311 (Asp311) interacts with Fe cation.

This sequence belongs to the KAE1 / TsaD family. The cofactor is Fe(2+).

The protein localises to the cytoplasm. It catalyses the reaction L-threonylcarbamoyladenylate + adenosine(37) in tRNA = N(6)-L-threonylcarbamoyladenosine(37) in tRNA + AMP + H(+). Its function is as follows. Required for the formation of a threonylcarbamoyl group on adenosine at position 37 (t(6)A37) in tRNAs that read codons beginning with adenine. Is involved in the transfer of the threonylcarbamoyl moiety of threonylcarbamoyl-AMP (TC-AMP) to the N6 group of A37, together with TsaE and TsaB. TsaD likely plays a direct catalytic role in this reaction. This Orientia tsutsugamushi (strain Ikeda) (Rickettsia tsutsugamushi) protein is tRNA N6-adenosine threonylcarbamoyltransferase.